We begin with the raw amino-acid sequence, 556 residues long: Zinc finger protein 18 (556 aa).

An SCAN box domain is found at arginine 41–proline 123. The segment at glutamine 169–glutamate 195 is disordered. Residues glutamate 218–arginine 291 enclose the KRAB domain. 5 consecutive C2H2-type zinc fingers follow at residues proline 415–histidine 437, phenylalanine 443–histidine 465, cysteine 471–histidine 493, tyrosine 499–histidine 521, and tyrosine 527–histidine 549.

The protein belongs to the krueppel C2H2-type zinc-finger protein family.

Its subcellular location is the nucleus. Functionally, may be involved in transcriptional regulation. The chain is Zinc finger protein 18 (Znf18) from Mus musculus (Mouse).